We begin with the raw amino-acid sequence, 369 residues long: Erythronate-4-phosphate dehydrogenase (369 aa).

The substrate site is built by Ser45 and Thr66. Asp146 serves as a coordination point for NAD(+). Residue Arg209 is part of the active site. An NAD(+)-binding site is contributed by Asp233. The active site involves Glu238. The active-site Proton donor is the His255. Gly258 contributes to the NAD(+) binding site.

It belongs to the D-isomer specific 2-hydroxyacid dehydrogenase family. PdxB subfamily. As to quaternary structure, homodimer.

It is found in the cytoplasm. It catalyses the reaction 4-phospho-D-erythronate + NAD(+) = (R)-3-hydroxy-2-oxo-4-phosphooxybutanoate + NADH + H(+). It functions in the pathway cofactor biosynthesis; pyridoxine 5'-phosphate biosynthesis; pyridoxine 5'-phosphate from D-erythrose 4-phosphate: step 2/5. Catalyzes the oxidation of erythronate-4-phosphate to 3-hydroxy-2-oxo-4-phosphonooxybutanoate. The polypeptide is Erythronate-4-phosphate dehydrogenase (Porphyromonas gingivalis (strain ATCC BAA-308 / W83)).